The chain runs to 182 residues: Ribosome-recycling factor (182 aa).

This sequence belongs to the RRF family.

It is found in the cytoplasm. Its function is as follows. Responsible for the release of ribosomes from messenger RNA at the termination of protein biosynthesis. May increase the efficiency of translation by recycling ribosomes from one round of translation to another. In Nostoc sp. (strain PCC 7120 / SAG 25.82 / UTEX 2576), this protein is Ribosome-recycling factor.